The primary structure comprises 445 residues: Probable D-serine dehydratase (445 aa).

The residue at position 111 (K111) is an N6-(pyridoxal phosphate)lysine.

It belongs to the serine/threonine dehydratase family. DsdA subfamily. Pyridoxal 5'-phosphate serves as cofactor.

The enzyme catalyses D-serine = pyruvate + NH4(+). This Burkholderia pseudomallei (strain 1106a) protein is Probable D-serine dehydratase.